We begin with the raw amino-acid sequence, 501 residues long: Endonuclease domain-containing 1 protein (501 aa).

The first 21 residues, Met-1 to Ala-21, serve as a signal peptide directing secretion. Residue Lys-408 is modified to N6-acetyllysine.

The protein belongs to the DNA/RNA non-specific endonuclease family. Interacts with RNF26; this interaction is important to modulate innate immune signaling through the cGAS-STING pathway.

It localises to the secreted. In terms of biological role, may act as a DNase and a RNase. Plays a role in the modulation of innate immune signaling through the cGAS-STING pathway by interacting with RNF26. In Mus musculus (Mouse), this protein is Endonuclease domain-containing 1 protein (Endod1).